A 293-amino-acid chain; its full sequence is Ribosomal protein L11 methyltransferase (293 aa).

Positions 145, 166, 188, and 230 each coordinate S-adenosyl-L-methionine.

It belongs to the methyltransferase superfamily. PrmA family.

The protein localises to the cytoplasm. It catalyses the reaction L-lysyl-[protein] + 3 S-adenosyl-L-methionine = N(6),N(6),N(6)-trimethyl-L-lysyl-[protein] + 3 S-adenosyl-L-homocysteine + 3 H(+). Functionally, methylates ribosomal protein L11. This chain is Ribosomal protein L11 methyltransferase, found in Shewanella sediminis (strain HAW-EB3).